A 258-amino-acid chain; its full sequence is Apolipoprotein A-I (258 aa).

Positions 1 to 18 are cleaved as a signal peptide; the sequence is MKFLVLALTILLAAGTQA. A 3 X approximate tandem repeats region spans residues 32-63; it reads VKAALNMYIAQVKLTAQRSIDLLDDTEYKEYK. 2 repeat units span residues 64 to 85 and 86 to 106. Positions 64 to 258 are 10 X approximate tandem repeats; it reads MQLSQSLDNL…WLSTRPSARP (195 aa). One copy of the 3; half-length repeat lies at 107-117; that stretch reads KDVEDVRTQLE. 7 repeat units span residues 118 to 139, 140 to 161, 162 to 183, 184 to 205, 206 to 227, 228 to 238, and 239 to 258. A disordered region spans residues 233-258; the sequence is FKARWAPPPRRPSKSSWLSTRPSARP. The segment covering 246–258 has biased composition (polar residues); it reads KSSWLSTRPSARP.

It belongs to the apolipoprotein A1/A4/E family. As to expression, major protein of plasma HDL, also found in chylomicrons. Expressed in liver, intestine and muscle.

The protein resides in the secreted. Functionally, participates in the reverse transport of cholesterol from tissues to the liver for excretion by promoting cholesterol efflux from tissues and by acting as a cofactor for the lecithin cholesterol acyltransferase (LCAT). This is Apolipoprotein A-I (apoa1) from Salmo salar (Atlantic salmon).